Reading from the N-terminus, the 1377-residue chain is Zinc finger MYM-type protein 2 (1377 aa).

Glycyl lysine isopeptide (Lys-Gly) (interchain with G-Cter in SUMO2) cross-links involve residues K48, K88, K98, and K104. Polar residues-rich tracts occupy residues 85–115 and 127–138; these read TSSK…SVSE and TNQGQEKNSSNF. The segment at 85–177 is disordered; the sequence is TSSKNEELQG…GMGNSGITTE (93 aa). A compositionally biased stretch (basic and acidic residues) spans 139–152; sequence IERRPPETKNRTND. K147 is covalently cross-linked (Glycyl lysine isopeptide (Lys-Gly) (interchain with G-Cter in SUMO2)). Positions 153 to 164 are enriched in polar residues; that stretch reads VDFSTSSFSRSK. A Phosphoserine modification is found at S159. Residues K253 and K297 each participate in a glycyl lysine isopeptide (Lys-Gly) (interchain with G-Cter in SUMO2) cross-link. The tract at residues 273–305 is disordered; that stretch reads NGESATHHNPDSWISQSASFPRNQKQPGVDSLS. Over residues 284–298 the composition is skewed to polar residues; the sequence is SWISQSASFPRNQKQ. S305 carries the post-translational modification Phosphoserine. Glycyl lysine isopeptide (Lys-Gly) (interchain with G-Cter in SUMO2) cross-links involve residues K312, K325, K348, and K366. An MYM-type 1 zinc finger spans residues 327–363; it reads VKVTCANCKKPLQKGQTAYQRKGSAHLFCSTTCLSSF. The MYM-type 2 zinc-finger motif lies at 369–409; sequence PKKLCVMCKKDITTMKGTIVAQVDSSESFQEFCSTSCLSLY. Glycyl lysine isopeptide (Lys-Gly) (interchain with G-Cter in SUMO2) cross-links involve residues K417, K441, K491, K503, K513, K529, and K532. 2 MYM-type zinc fingers span residues 421–456 and 463–502; these read NKSR…FNRY and IMNC…VSEY. Residues 533–570 form an MYM-type 5 zinc finger; it reads LTTCTGCRTQCRFFDMTQCIGPNGYMEPYCSTACMNSH. Residues K576, K603, K649, K658, K688, K700, and K709 each participate in a glycyl lysine isopeptide (Lys-Gly) (interchain with G-Cter in SUMO2) cross-link. The MYM-type 6 zinc finger occupies 636–671; the sequence is QLKCNYCKNSFCSKPEILEWENKVHQFCSKTCSDDY. 2 consecutive MYM-type zinc fingers follow at residues 723–758 and 764–799; these read RCVT…CKKF and KAAR…LLRF. Glycyl lysine isopeptide (Lys-Gly) (interchain with G-Cter in SUMO2) cross-links involve residues K764, K788, K812, and K829. S838 and S958 each carry phosphoserine. 2 disordered regions span residues 983–1002 and 1028–1064; these read LLKN…PYEP and VFGE…SDNS. Residues 1039-1050 are compositionally biased toward basic residues; it reads PRSKKKGAKRKA. S1064 carries the post-translational modification Phosphoserine. The residue at position 1376 (T1376) is a Phosphothreonine.

As to quaternary structure, can form homodimers. May be a component of a BHC histone deacetylase complex that contains HDAC1, HDAC2, HMG20B/BRAF35, KDM1A, RCOR1/CoREST, PHF21A/BHC80, ZMYM2, ZNF217, ZMYM3, GSE1 and GTF2I. Interacts with FOXP1 and FOXP2.

The protein localises to the nucleus. Functionally, involved in the negative regulation of transcription. The sequence is that of Zinc finger MYM-type protein 2 (ZMYM2) from Homo sapiens (Human).